The chain runs to 1129 residues: CRISPR-associated endonuclease Cas12b (1129 aa).

The WED-I (OBD-I) domain stretch occupies residues 1–14 (MAVKSIKVKLRLDD). Residues 4–9 (KSIKVK) are binds sgRNA. Positions 15–386 (MPEIRAGLWK…FATFTLPDAT (372 aa)) are REC1 (Helical-1)domain. Binds DNA protospacer adjacent motif (PAM) on target DNA stretches follow at residues 118 to 122 (QQIAR) and 143 to 144 (GN). Positions 387–518 (AHPIWTRFDK…QSQSEARGER (132 aa)) are WED-II (OBD-II) domain. Residues 442–446 (SMSEQ) are binds sgRNA. A ruvC-I domain region spans residues 519 to 628 (RPPYAAVFRL…LLKLPGETES (110 aa)). The active-site For DNase activity of RuvC domain is the aspartate 570. Residues 573 to 574 (LR) form a binds non-target ssDNA region. The tract at residues 629 to 658 (KDLRAIREERQRTLRQLRTQLAYLRLLVRC) is bridge helix domain. The tract at residues 659-784 (GSEDVGRRER…SFFGKVSGQV (126 aa)) is REC2 (Helical-II) domain. Binds sgRNA regions lie at residues 742–746 (RPKIR), 753–754 (VG), 792–796 (RFAIT), 800–819 (HIDH…IIME), and 835–839 (WVAKY). Positions 785–900 (IRAEKGSRFA…GTMYAAFSSR (116 aa)) are ruvC-II domain. The For DNase activity of RuvC domain role is filled by glutamate 848. A binds non-target ssDNA region spans residues 897 to 900 (FSSR). 2 residues coordinate phosphate: serine 899 and arginine 911. Positions 901 to 974 (FDARTGAPGI…SAEEGDFHQI (74 aa)) are nuc-I domain. The binds sgRNA stretch occupies residues 973–978 (QIHADL). Positions 975-993 (HADLNAAQNLQQRLWSDFD) are ruvC-III domain. Aspartate 977 acts as the For DNase activity of RuvC domain in catalysis. Residues 994–1129 (ISQIRLRCDW…DSACENTGDI (136 aa)) form a nuc-II domain region.

The protein belongs to the CRISPR-associated endonuclease Cas12b family. In terms of assembly, monomer. It depends on a divalent metal cation as a cofactor.

Its function is as follows. CRISPR (clustered regularly interspaced short palindromic repeat), is an adaptive immune system that provides protection against mobile genetic elements (viruses, transposable elements and conjugative plasmids). CRISPR clusters contain sequences complementary to antecedent mobile elements and target invading nucleic acids. CRISPR clusters are transcribed and processed into CRISPR RNA (crRNA). In type II CRISPR systems correct processing of pre-crRNA requires a trans-encoded small RNA (tracrRNA), endogenous ribonuclease 3 (rnc) and this protein. The tracrRNA serves as a guide for ribonuclease 3-aided processing of pre-crRNA. Protein-crRNA-tracrRNA endonucleolytically cleave dsDNA target complementary to the spacer; protein is inactive in the absence of crRNA homologous to the target and tracrRNA. Recognizes a short motif in the CRISPR repeat sequences (the 5' PAM or protospacer adjacent motif, TTN in this organism) to help distinguish self versus nonself, as targets within the bacterial CRISPR locus do not have PAMs. PAM recognition is also required for catalytic activity. Cleavage results in staggered 6-8 base 5'-overhangs 14-17 and 23-24 bases downstream of the PAM (protospacer adjacent motif) on the non-target and target strands respectively. Both target and non-target strand DNA are probably independently cleaved in the same active site. The polypeptide is CRISPR-associated endonuclease Cas12b (Alicyclobacillus acidoterrestris (strain ATCC 49025 / DSM 3922 / CIP 106132 / NCIMB 13137 / GD3B)).